Here is a 231-residue protein sequence, read N- to C-terminus: Transcriptional regulatory protein KdpE (231 aa).

The 114-residue stretch at 4-117 (KILIIEDDHA…ELRARIRVIE (114 aa)) folds into the Response regulatory domain. Residue D53 is modified to 4-aspartylphosphate. The segment at residues 127–227 (NIVFTNGLLS…HPRIGYQMLQ (101 aa)) is a DNA-binding region (ompR/PhoB-type).

Post-translationally, phosphorylated by KdpD. Phosphorylation is required for transcriptional activity.

Member of the two-component regulatory system KdpD/KdpE that regulates the transcription of a series of virulence factors through sensing external K(+) concentrations. Also regulates capsular polysaccharide synthesis. Upon phosphorylation by KpdD, functions as a transcriptional regulator by direct binding to promoter regions of target genes including spa, hla, aur and geh. Represses the transcription of kdpFABC operon. This is Transcriptional regulatory protein KdpE from Staphylococcus aureus (strain NCTC 8325 / PS 47).